The primary structure comprises 49 residues: Large ribosomal subunit protein bL33A (49 aa).

Belongs to the bacterial ribosomal protein bL33 family.

This is Large ribosomal subunit protein bL33A from Latilactobacillus sakei subsp. sakei (strain 23K) (Lactobacillus sakei subsp. sakei).